A 3508-amino-acid chain; its full sequence is WD repeat and FYVE domain-containing protein 3 (3508 aa).

Residues Ser-1942 and Ser-2277 each carry the phosphoserine modification. Disordered stretches follow at residues 2279 to 2303 (FGLSKLTGSRRNRKESGLHKHSPSP) and 2441 to 2504 (SSEG…EKTD). The sufficient for translocalization to p62 bodies/ALIS stretch occupies residues 2284–2963 (LTGSRRNRKE…PHPPKRVRSR (680 aa)). The span at 2450-2459 (EPEHGEDTIA) shows a compositional bias: basic and acidic residues. Position 2474 is a phosphoserine (Ser-2474). The region spanning 2513 to 2638 (EEGEKIQHMY…IRNKVYQRFL (126 aa)) is the BEACH-type PH domain. An interaction with SQSTM1 region spans residues 2568-3508 (MHEPIIPRGA…RGAEDGPRNC (941 aa)). One can recognise a BEACH domain in the interval 2665 to 2958 (GLLSTLVGEK…QLFKKPHPPK (294 aa)). Positions 2963–3508 (RLNGDNIGIS…RGAEDGPRNC (546 aa)) are interaction with ATG5. WD repeat units lie at residues 3059–3097 (SEWGQILCAVCPNPKLVITGGTSTVVCVWEMGTSKEKAK), 3107–3146 (GHTDTVTCATASLAYHIIVSGSRDRTCIIWDLNKLSFLTQ), 3149–3188 (GHRAPVSALCINELTGDIVSCAGTYIHVWSINGNPIVSVN), and 3192–3236 (GRSQ…VPET). The interval 3254-3317 (AQIGQQAQDD…SGSDDSRRWS (64 aa)) is disordered. A compositionally biased stretch (acidic residues) spans 3261–3272 (QDDDSSDSETEE). A phosphoserine mark is found at Ser-3317 and Ser-3321. The short motif at 3326–3331 (DGFIFV) is the LIR element. A WD 5 repeat occupies 3390–3429 (THPAEVTALGVSKDHSRILVGDSRGRVFSWSVSDQPGRSA). The FYVE-type zinc-finger motif lies at 3436–3496 (DEGGDSCSGC…VCQNCYYSLQ (61 aa)). Positions 3442, 3445, 3458, 3461, 3466, 3469, 3488, and 3491 each coordinate Zn(2+).

Directly interacts with ATG5 and associates with the ATG12-ATG5-ATG16L complex. Interacts with p62/SQSTM1. Directly interacts with GABARAP, GABARAPL1 and GABARAPL2; the interaction with GABARAP is required for WDFY3 recruitment to MAP1LC3B-positive p62/SQSTM1 bodies. Weakly interacts with MAP1LC3C; this interaction is direct. Does not interact with MAP1LC3A, nor MAP1LC3B. Interacts with TRAF6. As to expression, widely expressed, with high levels in the brain (at protein level). In the brain, expressed by both neuronal and non-neuronal cells. Expressed in bones, in the periosteum, cartilage, growth plate, trabeculae of the primary spongiosa, and scattered hematopoietic cells within the medullary cavity. Tends to be expressed at lower levels in the hypertrophic zone compared to trabeculae. Expressed in osteoblasts, osteoclasts and bone-marrow derived macrophages.

The protein resides in the nucleus. Its subcellular location is the cytoplasm. The protein localises to the cytosol. It is found in the PML body. It localises to the membrane. The protein resides in the perikaryon. Its subcellular location is the cell projection. The protein localises to the axon. Required for selective macroautophagy (aggrephagy). Acts as an adapter protein by linking specific proteins destined for degradation to the core autophagic machinery members, such as the ATG5-ATG12-ATG16L E3-like ligase, SQSTM1 and LC3. Involved in the formation and autophagic degradation of cytoplasmic ubiquitin-containing inclusions (p62 bodies, ALIS/aggresome-like induced structures). Important for normal brain development. Essential for the formation of axonal tracts throughout the brain and spinal cord, including the formation of the major forebrain commissures. Involved in the ability of neural cells to respond to guidance cues. Required for cortical neurons to respond to the trophic effects of netrin-1/NTN1. Regulates Wnt signaling through the removal of DVL3 aggregates, likely in an autophagy-dependent manner. This process may be important for the determination of brain size during embryonic development. May regulate osteoclastogenesis by acting on the TNFSF11/RANKL - TRAF6 pathway. After cytokinetic abscission, involved in midbody remnant degradation. In vitro strongly binds to phosphatidylinositol 3-phosphate (PtdIns3P). In Mus musculus (Mouse), this protein is WD repeat and FYVE domain-containing protein 3 (Wdfy3).